We begin with the raw amino-acid sequence, 530 residues long: Autoinducer-2 kinase (530 aa).

This sequence belongs to the FGGY kinase family.

It is found in the cytoplasm. It catalyses the reaction (S)-4,5-dihydroxypentane-2,3-dione + ATP = (2S)-2-hydroxy-3,4-dioxopentyl phosphate + ADP + H(+). Functionally, catalyzes the phosphorylation of autoinducer-2 (AI-2) to phospho-AI-2, which subsequently inactivates the transcriptional regulator LsrR and leads to the transcription of the lsr operon. Phosphorylates the ring-open form of (S)-4,5-dihydroxypentane-2,3-dione (DPD), which is the precursor to all AI-2 signaling molecules, at the C5 position. The sequence is that of Autoinducer-2 kinase from Salmonella paratyphi A (strain ATCC 9150 / SARB42).